The chain runs to 223 residues: Putative NAD(P)H nitroreductase SAB2397c (223 aa).

Belongs to the nitroreductase family. FMN is required as a cofactor.

This chain is Putative NAD(P)H nitroreductase SAB2397c, found in Staphylococcus aureus (strain bovine RF122 / ET3-1).